The primary structure comprises 653 residues: Extracellular metalloproteinase (653 aa).

An N-terminal signal peptide occupies residues 1–19 (MRSFLLASLASLSVISVYG). Residues 20 to 244 (HPHARSTLTR…VHAVVDYSAD (225 aa)) constitute a propeptide that is removed on maturation. 3 N-linked (GlcNAc...) asparagine glycosylation sites follow: Asn-327, Asn-336, and Asn-412. His-429 contacts Zn(2+). Residue Glu-430 is part of the active site. Residue His-433 coordinates Zn(2+). 2 N-linked (GlcNAc...) asparagine glycosylation sites follow: Asn-636 and Asn-637.

Belongs to the peptidase M36 family. Zn(2+) serves as cofactor.

The protein resides in the secreted. In terms of biological role, secreted metalloproteinase that allows assimilation of proteinaceous substrates. The polypeptide is Extracellular metalloproteinase (MEP) (Pyrenophora tritici-repentis (strain Pt-1C-BFP) (Wheat tan spot fungus)).